The following is a 268-amino-acid chain: ELL-associated factor 1 (268 aa).

The disordered stretch occupies residues I106 to D268. Residues A128 to G154 show a composition bias toward pro residues. Phosphoserine is present on S165. A compositionally biased stretch (basic and acidic residues) spans D171 to V181. The interval D182–S262 is necessary for transactivation activity. The segment covering S188 to G203 has biased composition (low complexity). A compositionally biased stretch (polar residues) spans N238–D268.

It belongs to the EAF family. As to quaternary structure, component of the super elongation complex (SEC), at least composed of EAF1, EAF2, CDK9, MLLT3/AF9, AFF (AFF1 or AFF4), the P-TEFb complex and ELL (ELL, ELL2 or ELL3). Interacts with ELL and ELL2.

The protein localises to the nucleus speckle. It localises to the nucleus. The protein resides in the cajal body. Acts as a transcriptional transactivator of ELL and ELL2 elongation activities. The chain is ELL-associated factor 1 (Eaf1) from Mus musculus (Mouse).